The following is a 224-amino-acid chain: Proteasome subunit beta (224 aa).

A propeptide spans 1-6 (removed in mature form; by autocatalysis); sequence MDVMKG. Catalysis depends on threonine 7, which acts as the Nucleophile.

Belongs to the peptidase T1B family. As to quaternary structure, the 20S proteasome core is composed of 14 alpha and 14 beta subunits that assemble into four stacked heptameric rings, resulting in a barrel-shaped structure. The two inner rings, each composed of seven catalytic beta subunits, are sandwiched by two outer rings, each composed of seven alpha subunits. The catalytic chamber with the active sites is on the inside of the barrel. Has a gated structure, the ends of the cylinder being occluded by the N-termini of the alpha-subunits. Is capped at one or both ends by the proteasome regulatory ATPase, PAN.

The protein localises to the cytoplasm. The catalysed reaction is Cleavage of peptide bonds with very broad specificity.. The formation of the proteasomal ATPase PAN-20S proteasome complex, via the docking of the C-termini of PAN into the intersubunit pockets in the alpha-rings, triggers opening of the gate for substrate entry. Interconversion between the open-gate and close-gate conformations leads to a dynamic regulation of the 20S proteasome proteolysis activity. Its function is as follows. Component of the proteasome core, a large protease complex with broad specificity involved in protein degradation. The M.jannaschii proteasome is able to cleave oligopeptides after Glu, Asp, Tyr, Phe, Trp, slightly after Arg, but not after Ala. Thus, displays caspase-like and chymotrypsin-like activities and low level of trypsin-like activity. This chain is Proteasome subunit beta, found in Methanocaldococcus jannaschii (strain ATCC 43067 / DSM 2661 / JAL-1 / JCM 10045 / NBRC 100440) (Methanococcus jannaschii).